Consider the following 357-residue polypeptide: MAELKNDRFLRALLRQPVDRTPIWIMRQAGRYLPEYREVRAKAGDFLTLCTTPELACEVTLQPLRRFDLDAAIIFSDILTIPHAMGLGLYFSKGEGPRFERPVRTKNQVSALGVPDPESDLSYVMEALRLTRRELDGRVPLIGFSGSPWTLACYMVEGGSSKDFALIKGLMFEHPQVMHHLLEILAQAVTVYLNAQIAAGAQAVMLFDTWGGALSHRDYRDFSLSYMARIVEGVVRENEGRQVPVILFTKGGGLWLETMAGTGCDALGVDWTVDLAKARMQVGKQVALQGNMDPCVLYASSERVRQEASEIIKAYGAGSGHVFNLGHGIHPTVMPEKVAALVDAVHELSVPYHTYEE.

Residues 27–31, D77, Y154, T209, and H327 each bind substrate; that span reads RQAGR.

The protein belongs to the uroporphyrinogen decarboxylase family. In terms of assembly, homodimer.

The protein localises to the cytoplasm. It catalyses the reaction uroporphyrinogen III + 4 H(+) = coproporphyrinogen III + 4 CO2. Its pathway is porphyrin-containing compound metabolism; protoporphyrin-IX biosynthesis; coproporphyrinogen-III from 5-aminolevulinate: step 4/4. Its function is as follows. Catalyzes the decarboxylation of four acetate groups of uroporphyrinogen-III to yield coproporphyrinogen-III. In Nitrosococcus oceani (strain ATCC 19707 / BCRC 17464 / JCM 30415 / NCIMB 11848 / C-107), this protein is Uroporphyrinogen decarboxylase.